We begin with the raw amino-acid sequence, 223 residues long: MRGLFVTGTDTGVGKTEVACALVRAARAAGLDAVGMKPAQSGHVAGEPSDAERLREASGGVEPLEAICPYTFAAPLAPAAAARAEGREVSLARVVEAARALAARHAAVVVEGAGGLLVPLTARETHADLAAALGLPVLVVARAGLGTVNHTALTVEALERRGLPIAGIVLNRTGPEDDPSVPLNAAEIARLTHREPLALLPWEPDIARRARALGSVLAAKIQF.

T16 serves as a coordination point for Mg(2+). The active site involves K37. S41 contributes to the substrate binding site. The Mg(2+) site is built by D50 and E111. Residues D50, 111–114 (EGAG), and 171–172 (NR) contribute to the ATP site.

This sequence belongs to the dethiobiotin synthetase family. Homodimer. Mg(2+) serves as cofactor.

It is found in the cytoplasm. The enzyme catalyses (7R,8S)-7,8-diammoniononanoate + CO2 + ATP = (4R,5S)-dethiobiotin + ADP + phosphate + 3 H(+). It participates in cofactor biosynthesis; biotin biosynthesis; biotin from 7,8-diaminononanoate: step 1/2. Catalyzes a mechanistically unusual reaction, the ATP-dependent insertion of CO2 between the N7 and N8 nitrogen atoms of 7,8-diaminopelargonic acid (DAPA, also called 7,8-diammoniononanoate) to form a ureido ring. This is ATP-dependent dethiobiotin synthetase BioD from Anaeromyxobacter dehalogenans (strain 2CP-C).